The primary structure comprises 840 residues: Probable alpha-glucuronidase A (840 aa).

The signal sequence occupies residues 1 to 19 (MRSVITTLTLVASVGLAVA). N-linked (GlcNAc...) asparagine glycosylation is found at N222, N310, N465, N527, N576, N682, and N732.

This sequence belongs to the glycosyl hydrolase 67 family.

Its subcellular location is the secreted. It catalyses the reaction an alpha-D-glucuronoside + H2O = D-glucuronate + an alcohol. In terms of biological role, alpha-glucuronidase involved in the hydrolysis of xylan, a major structural heterogeneous polysaccharide found in plant biomass representing the second most abundant polysaccharide in the biosphere, after cellulose. Releases 4-O-methylglucuronic acid from xylan. The protein is Probable alpha-glucuronidase A (aguA) of Aspergillus clavatus (strain ATCC 1007 / CBS 513.65 / DSM 816 / NCTC 3887 / NRRL 1 / QM 1276 / 107).